The following is a 357-amino-acid chain: D-alanine--D-alanine ligase (357 aa).

An ATP-grasp domain is found at K145–N339. P172–S225 is an ATP binding site. The Mg(2+) site is built by D294, E306, and N308.

Belongs to the D-alanine--D-alanine ligase family. Requires Mg(2+) as cofactor. It depends on Mn(2+) as a cofactor.

The protein localises to the cytoplasm. The enzyme catalyses 2 D-alanine + ATP = D-alanyl-D-alanine + ADP + phosphate + H(+). It participates in cell wall biogenesis; peptidoglycan biosynthesis. Cell wall formation. The protein is D-alanine--D-alanine ligase of Lacticaseibacillus paracasei (strain ATCC 334 / BCRC 17002 / CCUG 31169 / CIP 107868 / KCTC 3260 / NRRL B-441) (Lactobacillus paracasei).